Consider the following 389-residue polypeptide: Phospho-N-acetylmuramoyl-pentapeptide-transferase (389 aa).

The next 10 membrane-spanning stretches (helical) occupy residues 25-45, 74-94, 97-117, 134-154, 190-210, 222-242, 259-279, 286-306, 311-331, and 366-386; these read RAVM…PWVI, MGGV…CDWG, FIWV…VDDY, FFWQ…SVSE, VSYP…IVGS, GLVI…AYVM, AGEL…FLWF, VFMG…VAVI, IVLF…MLQV, and QVTV…LSTL.

The protein belongs to the glycosyltransferase 4 family. MraY subfamily. Mg(2+) serves as cofactor.

It is found in the cell inner membrane. It carries out the reaction UDP-N-acetyl-alpha-D-muramoyl-L-alanyl-gamma-D-glutamyl-meso-2,6-diaminopimeloyl-D-alanyl-D-alanine + di-trans,octa-cis-undecaprenyl phosphate = di-trans,octa-cis-undecaprenyl diphospho-N-acetyl-alpha-D-muramoyl-L-alanyl-D-glutamyl-meso-2,6-diaminopimeloyl-D-alanyl-D-alanine + UMP. It functions in the pathway cell wall biogenesis; peptidoglycan biosynthesis. Catalyzes the initial step of the lipid cycle reactions in the biosynthesis of the cell wall peptidoglycan: transfers peptidoglycan precursor phospho-MurNAc-pentapeptide from UDP-MurNAc-pentapeptide onto the lipid carrier undecaprenyl phosphate, yielding undecaprenyl-pyrophosphoryl-MurNAc-pentapeptide, known as lipid I. The protein is Phospho-N-acetylmuramoyl-pentapeptide-transferase of Cupriavidus pinatubonensis (strain JMP 134 / LMG 1197) (Cupriavidus necator (strain JMP 134)).